The chain runs to 244 residues: Mono-ADP-ribosyltransferase C3 (244 aa).

The N-terminal stretch at 1 to 40 is a signal peptide; the sequence is MKGIRKSILCLVLSAGVIAPVTTSIVQSPQKCYACTVDKG. Positions 44–244 constitute a TR mART core domain; it reads DTFTEFTNVE…QIMITAMIFK (201 aa). NAD(+)-binding positions include Thr-80, Asn-87, Arg-91, 128-131, and 167-169; these read RGDD and RTE. Arg-128 is a catalytic residue. Ser-174 is a catalytic residue. NAD(+)-binding positions include 182–185 and 211–213; these read FGGR and QLE. Residue Glu-213 is part of the active site.

This sequence to exoenzymes 3 of C.limosum and C.botulinum D phage, and to S.aureus ediN. In terms of assembly, monomer.

Its subcellular location is the secreted. It catalyses the reaction L-asparaginyl-[protein] + NAD(+) = N(4)-(ADP-D-ribosyl)-L-asparaginyl-[protein] + nicotinamide + H(+). In terms of biological role, ADP-ribosylates eukaryotic Rho and Rac proteins on an asparagine residue. This Clostridium botulinum C phage (Clostridium botulinum C bacteriophage) protein is Mono-ADP-ribosyltransferase C3.